Consider the following 160-residue polypeptide: Cytochrome b6-f complex subunit 4 (160 aa).

Transmembrane regions (helical) follow at residues Leu-36–Val-56, Leu-95–Glu-115, and Thr-131–Ile-151.

This sequence belongs to the cytochrome b family. PetD subfamily. The 4 large subunits of the cytochrome b6-f complex are cytochrome b6, subunit IV (17 kDa polypeptide, petD), cytochrome f and the Rieske protein, while the 4 small subunits are petG, petL, petM and petN. The complex functions as a dimer.

The protein localises to the plastid. It is found in the chloroplast thylakoid membrane. Functionally, component of the cytochrome b6-f complex, which mediates electron transfer between photosystem II (PSII) and photosystem I (PSI), cyclic electron flow around PSI, and state transitions. The protein is Cytochrome b6-f complex subunit 4 of Morus indica (Mulberry).